A 150-amino-acid polypeptide reads, in one-letter code: MRCVVYSIAKSSPLELVKIYQKQCKQFGCELELVDLFPKNIANAQKISKELAQKSYSLAFEPYLNPKAINIALHPKAERGDSFAFSKMLENYLNINFFIAGAYGFEEKFLKDCQAWSLSEMTFSHEVAKIVLCEQIYRALSIIFRHPYHK.

Residues I71, A100, and 118 to 123 (LSEMTF) each bind S-adenosyl-L-methionine.

Belongs to the RNA methyltransferase RlmH family. In terms of assembly, homodimer.

The protein localises to the cytoplasm. It catalyses the reaction pseudouridine(1915) in 23S rRNA + S-adenosyl-L-methionine = N(3)-methylpseudouridine(1915) in 23S rRNA + S-adenosyl-L-homocysteine + H(+). Its function is as follows. Specifically methylates the pseudouridine at position 1915 (m3Psi1915) in 23S rRNA. This chain is Ribosomal RNA large subunit methyltransferase H, found in Helicobacter acinonychis (strain Sheeba).